A 202-amino-acid chain; its full sequence is Pyridoxal 5'-phosphate synthase subunit PdxT (202 aa).

50-52 (GES) serves as a coordination point for L-glutamine. Catalysis depends on Cys-82, which acts as the Nucleophile. L-glutamine contacts are provided by residues Arg-111 and 140–141 (IR). Residues His-176 and Glu-178 each act as charge relay system in the active site.

Belongs to the glutaminase PdxT/SNO family. In the presence of PdxS, forms a dodecamer of heterodimers. Only shows activity in the heterodimer.

It catalyses the reaction aldehydo-D-ribose 5-phosphate + D-glyceraldehyde 3-phosphate + L-glutamine = pyridoxal 5'-phosphate + L-glutamate + phosphate + 3 H2O + H(+). It carries out the reaction L-glutamine + H2O = L-glutamate + NH4(+). It participates in cofactor biosynthesis; pyridoxal 5'-phosphate biosynthesis. In terms of biological role, catalyzes the hydrolysis of glutamine to glutamate and ammonia as part of the biosynthesis of pyridoxal 5'-phosphate. The resulting ammonia molecule is channeled to the active site of PdxS. In Streptomyces coelicolor (strain ATCC BAA-471 / A3(2) / M145), this protein is Pyridoxal 5'-phosphate synthase subunit PdxT.